The primary structure comprises 185 residues: CDP-diacylglycerol--glycerol-3-phosphate 3-phosphatidyltransferase (185 aa).

4 helical membrane-spanning segments follow: residues 7-26 (IFLT…AFYL), 33-52 (FITT…DGYL), 89-108 (FWIT…ISAL), and 151-172 (IAAI…IQYL).

It belongs to the CDP-alcohol phosphatidyltransferase class-I family.

It is found in the cell membrane. It carries out the reaction a CDP-1,2-diacyl-sn-glycerol + sn-glycerol 3-phosphate = a 1,2-diacyl-sn-glycero-3-phospho-(1'-sn-glycero-3'-phosphate) + CMP + H(+). It participates in phospholipid metabolism; phosphatidylglycerol biosynthesis; phosphatidylglycerol from CDP-diacylglycerol: step 1/2. Its function is as follows. This protein catalyzes the committed step to the synthesis of the acidic phospholipids. The protein is CDP-diacylglycerol--glycerol-3-phosphate 3-phosphatidyltransferase (pgsA) of Haemophilus influenzae (strain ATCC 51907 / DSM 11121 / KW20 / Rd).